The sequence spans 205 residues: Gap junction epsilon-1 protein (205 aa).

The Cytoplasmic segment spans residues 1-22 (MSLNYIKNFYEGCVKPPTVIGQ). Residues 23–43 (FHTLFFGSVRMFFLGVLGFAV) traverse the membrane as a helical segment. Residues 44-74 (YGNEALHFSCDPDKREINLFCYNQFRPITPQ) are Extracellular-facing. 2 disulfide bridges follow: Cys53/Cys161 and Cys64/Cys147. A helical transmembrane segment spans residues 75–95 (VFWALQLVIVLLPGAIFHLYA). Residues 96-111 (ACKSINQDCILQKPVY) lie on the Cytoplasmic side of the membrane. Residues 112-132 (TVIYVLSVLLRISLEVFAFWL) form a helical membrane-spanning segment. At 133 to 170 (QIHLFGFQVKPIYLCDTESLGKKPNILKCMVPEHFEKT) the chain is on the extracellular side. A helical membrane pass occupies residues 171-191 (IFLIAMYTFTVITMVLCVAEV). Residues 192 to 205 (FEIIFRRSCFLFKR) lie on the Cytoplasmic side of the membrane.

It belongs to the connexin family. Beta-type (group I) subfamily. In terms of assembly, a connexon is composed of a hexamer of connexins. In terms of tissue distribution, highly expressed in lens, where it is mainly found in lens fibers and to a lesser extent in lens epithelium. Weakly expressed in retina. Not detected in other tissues tested.

Its subcellular location is the cell membrane. Functionally, mediates calcium-independent ATP release, suggesting activity as a hemichannel. Does not form functional gap junctions. May play a non-essential role in eye lens development. The chain is Gap junction epsilon-1 protein from Mus musculus (Mouse).